We begin with the raw amino-acid sequence, 182 residues long: Protein canopy homolog 2 (182 aa).

A signal peptide spans 1 to 20 (MKGWGWLALLLGALLGTAWA). Positions 24 to 175 (QDLHCGACRA…KRTDLCDHAL (152 aa)) constitute a Saposin B-type domain. Cystine bridges form between C28/C171, C31/C164, and C86/C137. Phosphoserine is present on S115. The Prevents secretion from ER signature appears at 179–182 (HDEL).

The protein belongs to the canopy family. As to quaternary structure, interacts with MYLIP/MIR. As to expression, expressed in different tissues. Highest levels are detected in adult placenta, liver and pancreas.

It is found in the endoplasmic reticulum. Functionally, positive regulator of neurite outgrowth by stabilizing myosin regulatory light chain (MRLC). It prevents MIR-mediated MRLC ubiquitination and its subsequent proteasomal degradation. The polypeptide is Protein canopy homolog 2 (CNPY2) (Homo sapiens (Human)).